A 62-amino-acid chain; its full sequence is MMFKLGVLLTICLLLFPLTGTALDGDQLAEHMLDISSGINDRWFDPVRKCCMRPVCTCPCCS.

Positions 1 to 22 (MMFKLGVLLTICLLLFPLTGTA) are cleaved as a signal peptide. Positions 23–49 (LDGDQLAEHMLDISSGINDRWFDPVRK) are excised as a propeptide. Disulfide bonds link cysteine 50/cysteine 60, cysteine 51/cysteine 58, and cysteine 56/cysteine 61.

It belongs to the conotoxin M superfamily. As to expression, expressed by the venom duct.

The protein resides in the secreted. The protein is Conotoxin reg3.5 of Conus regius (Crown cone).